Here is a 213-residue protein sequence, read N- to C-terminus: Guanylate kinase (213 aa).

The Guanylate kinase-like domain occupies 12 to 190 (GLCLVVAAPS…AIDQVRTILH (179 aa)). 19-26 (APSGAGKS) provides a ligand contact to ATP.

This sequence belongs to the guanylate kinase family.

The protein resides in the cytoplasm. It catalyses the reaction GMP + ATP = GDP + ADP. Functionally, essential for recycling GMP and indirectly, cGMP. This Granulibacter bethesdensis (strain ATCC BAA-1260 / CGDNIH1) protein is Guanylate kinase.